Here is an 884-residue protein sequence, read N- to C-terminus: Probable LRR receptor-like serine/threonine-protein kinase PAM74 (884 aa).

An N-terminal signal peptide occupies residues 1–23 (MDSPCWLLLLLLGAFAIIGCVQA). Residues 24-510 (QDQQEFISLD…TEKNSKKKFP (487 aa)) lie on the Extracellular side of the membrane. N-linked (GlcNAc...) asparagine glycosylation is found at asparagine 143, asparagine 182, asparagine 200, asparagine 256, asparagine 289, asparagine 400, asparagine 403, asparagine 417, asparagine 433, asparagine 444, asparagine 465, and asparagine 470. LRR repeat units lie at residues 412–433 (RVLS…AIQN), 436–457 (HLEK…FLAQ), and 460–480 (SLVI…QGLR). The helical transmembrane segment at 511-531 (VVIVASVASVAIIVAVLVIIF) threads the bilayer. Residues 532 to 884 (VLSKKKSSTV…FDTELFPRAR (353 aa)) are Cytoplasmic-facing. Threonine 570 bears the Phosphothreonine mark. The region spanning 579–852 (NNFQRVVGEG…QVANELKECL (274 aa)) is the Protein kinase domain. Residues 585–593 (VGEGGFGVV) and lysine 607 each bind ATP. Tyrosine 652 bears the Phosphotyrosine mark. Catalysis depends on aspartate 704, which acts as the Proton acceptor. Serine 738 carries the post-translational modification Phosphoserine. 2 positions are modified to phosphothreonine: threonine 739 and threonine 744. At tyrosine 752 the chain carries Phosphotyrosine.

It belongs to the protein kinase superfamily. Ser/Thr protein kinase family. In terms of assembly, binds to the ammonium transporter AMT1-1.

The protein localises to the membrane. The catalysed reaction is L-seryl-[protein] + ATP = O-phospho-L-seryl-[protein] + ADP + H(+). It carries out the reaction L-threonyl-[protein] + ATP = O-phospho-L-threonyl-[protein] + ADP + H(+). Required for accurate photosynthesis. In Arabidopsis thaliana (Mouse-ear cress), this protein is Probable LRR receptor-like serine/threonine-protein kinase PAM74 (PAM74).